The sequence spans 528 residues: MKANFGYITPVPLNMELIDISLSKTQKRTPTVIHPQYNIVKIRMFYMRKVKHAGNEFASRLGTILTDFPRIEDIHPFYGDLINVLYDRDHYKLALGHVNAAKNGIEKVSKEFVKLLKFADSLYRCKQLKRAALGRMASAAKKLGKTLEYLEEVRMHMSRLPSIDLSGRTLLVCGFPNVGKSSFVRKISRADVEVQPYPFTTKSLYVGHFDYKYLQWQVIDTPGILDQPLENRNTIEMLSITALAHIKAVVLYFIDLSETCGYSVEEQMDLFNTLNPLLSSNMVIVLSKSDVLGLSGMEDKKAIMSFLEGKKYMEMSCEKEENIDAVKAMACDLLLDERFERKINSERLSEYINRITIVRPKELREKAESFICSREVTEIENEQERYLIPEEYRYDIVPEIVDGKNVADFFDPDIEKKLKEVEEEEEGLLPMYCKTYDVLSPEERALKEEVVAGIERRRIINRLREKKRLPDSWKHRSRNSGGDIAVHVRRDSKTQVAQPPRLPSKKKARFDDKHYYDRKPKHLYRGRK.

The OBG-type G domain occupies 168–335 (RTLLVCGFPN…VKAMACDLLL (168 aa)). GTP is bound by residues 174–181 (GFPNVGKS), 220–224 (DTPGI), and 287–290 (SKSD). Positions 470–528 (PDSWKHRSRNSGGDIAVHVRRDSKTQVAQPPRLPSKKKARFDDKHYYDRKPKHLYRGRK) are disordered. Residues 509–518 (RFDDKHYYDR) show a composition bias toward basic and acidic residues. A compositionally biased stretch (basic residues) spans 519-528 (KPKHLYRGRK).

Belongs to the TRAFAC class OBG-HflX-like GTPase superfamily. OBG GTPase family. NOG subfamily.

The protein localises to the nucleus. It localises to the nucleolus. Functionally, involved in the biogenesis of the 60S ribosomal subunit. This Encephalitozoon cuniculi (strain GB-M1) (Microsporidian parasite) protein is Nucleolar GTP-binding protein 1 (NOG1).